A 458-amino-acid polypeptide reads, in one-letter code: Transcription factor Atf1 (458 aa).

A bZIP domain is found at 347 to 410; the sequence is EEKRRNFLER…VNLKTLLLAH (64 aa). A basic motif region spans residues 349–378; that stretch reads KRRNFLERNRVAALKCRQRKKQWLANLQNK. Residues 389–403 form a leucine-zipper region; that stretch reads LTATVTQLREEIVNL.

It belongs to the bZIP family.

It localises to the nucleus. In terms of biological role, transcription factor that positively regulates vegetative growth, reproduction, and osmotic stress response. The protein is Transcription factor Atf1 of Penicillium expansum (Blue mold rot fungus).